A 418-amino-acid chain; its full sequence is Acyl-[acyl-carrier-protein] desaturase 4, chloroplastic (418 aa).

The transit peptide at 1 to 70 (MASSGLAVAA…ATAAAPADTA (70 aa)) directs the protein to the chloroplast. Fe cation contacts are provided by Glu-152, Glu-190, His-193, Glu-243, Glu-276, and His-279.

It belongs to the fatty acid desaturase type 2 family. Homodimer. Requires Fe(2+) as cofactor.

It localises to the plastid. It is found in the chloroplast. Its pathway is lipid metabolism; fatty acid metabolism. Functionally, introduces a cis double bond in the acyl chain of an acyl-[acyl-carrier protein]. The sequence is that of Acyl-[acyl-carrier-protein] desaturase 4, chloroplastic from Oryza sativa subsp. japonica (Rice).